A 280-amino-acid chain; its full sequence is Acetyl-coenzyme A carboxylase carboxyl transferase subunit beta (280 aa).

The region spanning 24-280 (AWIKCDKCKN…IYTLIRHTHG (257 aa)) is the CoA carboxyltransferase N-terminal domain. Zn(2+)-binding residues include Cys-28, Cys-31, Cys-47, and Cys-50. A C4-type zinc finger spans residues 28-50 (CDKCKNILYIEDLLKNLKICPHC).

The protein belongs to the AccD/PCCB family. As to quaternary structure, acetyl-CoA carboxylase is a heterohexamer composed of biotin carboxyl carrier protein (AccB), biotin carboxylase (AccC) and two subunits each of ACCase subunit alpha (AccA) and ACCase subunit beta (AccD). Zn(2+) is required as a cofactor.

The protein resides in the cytoplasm. It carries out the reaction N(6)-carboxybiotinyl-L-lysyl-[protein] + acetyl-CoA = N(6)-biotinyl-L-lysyl-[protein] + malonyl-CoA. The protein operates within lipid metabolism; malonyl-CoA biosynthesis; malonyl-CoA from acetyl-CoA: step 1/1. In terms of biological role, component of the acetyl coenzyme A carboxylase (ACC) complex. Biotin carboxylase (BC) catalyzes the carboxylation of biotin on its carrier protein (BCCP) and then the CO(2) group is transferred by the transcarboxylase to acetyl-CoA to form malonyl-CoA. This chain is Acetyl-coenzyme A carboxylase carboxyl transferase subunit beta, found in Sulfurihydrogenibium sp. (strain YO3AOP1).